The following is a 53-amino-acid chain: UPF0391 membrane protein Bcen2424_6479 (53 aa).

2 helical membrane-spanning segments follow: residues 5-25 (AIIFFIIAIIAAVFGFGGIAA) and 30-50 (IAKILFYIFVVIFLVTLLLGV).

It belongs to the UPF0391 family.

Its subcellular location is the cell membrane. This is UPF0391 membrane protein Bcen2424_6479 from Burkholderia cenocepacia (strain HI2424).